The chain runs to 145 residues: 3-dehydroquinate dehydratase (145 aa).

Tyr-24 acts as the Proton acceptor in catalysis. Substrate is bound by residues Asn-75, His-81, and Asp-88. His-101 serves as the catalytic Proton donor. Substrate contacts are provided by residues 102 to 103 (IS) and Arg-112.

Belongs to the type-II 3-dehydroquinase family. In terms of assembly, homododecamer.

The enzyme catalyses 3-dehydroquinate = 3-dehydroshikimate + H2O. Its pathway is metabolic intermediate biosynthesis; chorismate biosynthesis; chorismate from D-erythrose 4-phosphate and phosphoenolpyruvate: step 3/7. In terms of biological role, catalyzes a trans-dehydration via an enolate intermediate. This chain is 3-dehydroquinate dehydratase, found in Corynebacterium glutamicum (strain R).